Here is a 166-residue protein sequence, read N- to C-terminus: Pyruvoyl-dependent arginine decarboxylase (166 aa).

Serine 45 carries the pyruvic acid (Ser) modification.

The protein belongs to the PdaD family. Pyruvate is required as a cofactor.

The enzyme catalyses L-arginine + H(+) = agmatine + CO2. The protein is Pyruvoyl-dependent arginine decarboxylase of Methanocella arvoryzae (strain DSM 22066 / NBRC 105507 / MRE50).